We begin with the raw amino-acid sequence, 130 residues long: Small ribosomal subunit protein uS11c (130 aa).

This sequence belongs to the universal ribosomal protein uS11 family. As to quaternary structure, part of the 30S ribosomal subunit.

Its subcellular location is the plastid. It localises to the chloroplast. This is Small ribosomal subunit protein uS11c from Spirogyra maxima (Green alga).